The sequence spans 307 residues: Phospho-N-acetylmuramoyl-pentapeptide-transferase (307 aa).

Helical transmembrane passes span 3 to 23 (IILFTSLVAFFVFLLILKYWI), 47 to 67 (SGTPVMGGIIFLIVSIPFLFF), 71 to 91 (FFPSLSTILFGLLGLLDDFKL), 105 to 125 (IFLSFIITLLLYIFSFHDYKI), 137 to 157 (IFYVILFFVVFIAVPNAINLT), 162 to 182 (GLAGGTSLITLFFFLIYNFQF), 186 to 206 (LTLEISLMITALIAFLWFNSH), 210 to 230 (IFMGDVGAFALGGFIASLSII), 237 to 257 (LVFLGGIFLIESLSVFIQVFF), and 285 to 305 (VVWRFYIIHLIMMIGGIILWN).

Belongs to the glycosyltransferase 4 family. MraY subfamily. Mg(2+) is required as a cofactor.

It is found in the cell inner membrane. It catalyses the reaction UDP-N-acetyl-alpha-D-muramoyl-L-alanyl-gamma-D-glutamyl-meso-2,6-diaminopimeloyl-D-alanyl-D-alanine + di-trans,octa-cis-undecaprenyl phosphate = di-trans,octa-cis-undecaprenyl diphospho-N-acetyl-alpha-D-muramoyl-L-alanyl-D-glutamyl-meso-2,6-diaminopimeloyl-D-alanyl-D-alanine + UMP. It functions in the pathway cell wall biogenesis; peptidoglycan biosynthesis. Its function is as follows. Catalyzes the initial step of the lipid cycle reactions in the biosynthesis of the cell wall peptidoglycan: transfers peptidoglycan precursor phospho-MurNAc-pentapeptide from UDP-MurNAc-pentapeptide onto the lipid carrier undecaprenyl phosphate, yielding undecaprenyl-pyrophosphoryl-MurNAc-pentapeptide, known as lipid I. The protein is Phospho-N-acetylmuramoyl-pentapeptide-transferase of Dictyoglomus turgidum (strain DSM 6724 / Z-1310).